The primary structure comprises 117 residues: TTPSYVAFTDTERLWPFQVINEAGKPKDAGVIAGLNVLRATAGDTHLGGEDFDNRLVSHFVEEFKRLRTACERAKIHDIVLVGGSTRLLQDYFNGRDLNKITITNDKGRLSKEEIER.

ATP is bound by residues 72–75 and 84–87; these read ERAK and GSTR.

This sequence belongs to the heat shock protein 70 family. As to quaternary structure, interacts with PRKN. Detected at higher levels in caput epididymal spermatazoa than in cauda epididymal spermatazoa (at protein level).

Molecular chaperone implicated in a wide variety of cellular processes, including protection of the proteome from stress, folding and transport of newly synthesized polypeptides, activation of proteolysis of misfolded proteins and the formation and dissociation of protein complexes. Plays a pivotal role in the protein quality control system, ensuring the correct folding of proteins, the re-folding of misfolded proteins and controlling the targeting of proteins for subsequent degradation. This is achieved through cycles of ATP binding, ATP hydrolysis and ADP release, mediated by co-chaperones. The affinity for polypeptides is regulated by its nucleotide bound state. In the ATP-bound form, it has a low affinity for substrate proteins. However, upon hydrolysis of the ATP to ADP, it undergoes a conformational change that increases its affinity for substrate proteins. It goes through repeated cycles of ATP hydrolysis and nucleotide exchange, which permits cycles of substrate binding and release. Positive regulator of PRKN translocation to damaged mitochondria. The polypeptide is Heat shock 70 kDa protein 1-like (Mesocricetus auratus (Golden hamster)).